We begin with the raw amino-acid sequence, 155 residues long: Small ribosomal subunit protein uS7 (155 aa).

It belongs to the universal ribosomal protein uS7 family. As to quaternary structure, part of the 30S ribosomal subunit. Contacts proteins S9 and S11.

One of the primary rRNA binding proteins, it binds directly to 16S rRNA where it nucleates assembly of the head domain of the 30S subunit. Is located at the subunit interface close to the decoding center, probably blocks exit of the E-site tRNA. The polypeptide is Small ribosomal subunit protein uS7 (Ureaplasma parvum serovar 3 (strain ATCC 27815 / 27 / NCTC 11736)).